The following is a 335-amino-acid chain: UPF0353 protein MUL_1490 (335 aa).

2 consecutive transmembrane segments (helical) span residues 18–38 and 67–87; these read WFFLFLLVVAGLIAIYVVLQL and IPAMLLALSLVLFTVAMAGPT. The 201-residue stretch at 98–298 folds into the VWFA domain; sequence VVMLVIDVSQ…SVYVSLQQQI (201 aa). Residues 309–329 traverse the membrane as a helical segment; it reads MGWLRLGALVLVAAALAALLI.

It belongs to the UPF0353 family.

The protein resides in the cell membrane. This chain is UPF0353 protein MUL_1490, found in Mycobacterium ulcerans (strain Agy99).